Here is a 102-residue protein sequence, read N- to C-terminus: Small ribosomal subunit protein uS10 (102 aa).

The protein belongs to the universal ribosomal protein uS10 family. In terms of assembly, part of the 30S ribosomal subunit.

In terms of biological role, involved in the binding of tRNA to the ribosomes. The polypeptide is Small ribosomal subunit protein uS10 (Streptococcus pyogenes serotype M12 (strain MGAS2096)).